Reading from the N-terminus, the 605-residue chain is MDPAEAVLQEKALKFMCSMPRSLWLGCSSLADSMPSLRCLYNPGTGALTAFQNSSEREDCNNGEPPRKIIPEKNSLRQTYNSCARLCLNQETVCLASTAMKTENCVAKTKLANGTSSMIVPKQRKLSASYEKEKELCVKYFEQWSESDQVEFVEHLISQMCHYQHGHINSYLKPMLQRDFITALPARGLDHIAENILSYLDAKSLCAAELVCKEWYRVTSDGMLWKKLIERMVRTDSLWRGLAERRGWGQYLFKNKPPDGNAPPNSFYRALYPKIIQDIETIESNWRCGRHSLQRIHCRSETSKGVYCLQYDDQKIVSGLRDNTIKIWDKNTLECKRILTGHTGSVLCLQYDERVIITGSSDSTVRVWDVNTGEMLNTLIHHCEAVLHLRFNNGMMVTCSKDRSIAVWDMASPTDITLRRVLVGHRAAVNVVDFDDKYIVSASGDRTIKVWNTSTCEFVRTLNGHKRGIACLQYRDRLVVSGSSDNTIRLWDIECGACLRVLEGHEELVRCIRFDNKRIVSGAYDGKIKVWDLVAALDPRAPAGTLCLRTLVEHSGRVFRLQFDEFQIVSSSHDDTILIWDFLNDPAAQAEPPRSPSRTYTYISR.

A homodimerization domain D region spans residues 128–177; sequence ASYEKEKELCVKYFEQWSESDQVEFVEHLISQMCHYQHGHINSYLKPMLQ. One can recognise an F-box domain in the interval 190–228; sequence DHIAENILSYLDAKSLCAAELVCKEWYRVTSDGMLWKKL. A required for down-regulation of SNAI1 region spans residues 190 to 228; it reads DHIAENILSYLDAKSLCAAELVCKEWYRVTSDGMLWKKL. WD repeat units follow at residues 301–338, 341–378, 381–418, 424–461, 464–503, 505–541, and 553–590; these read ETSK…CKRI, GHTG…MLNT, HHCE…DITL, GHRA…FVRT, GHKR…RVLE, HEEL…DPRA, and EHSG…AAQA.

In terms of assembly, homodimer. Self-associates. Component of the SCF(BTRC) complex formed of CUL1, SKP1, RBX1 and a BTRC dimer. Direct interaction with SKP1 occurs via the F-box domain. Interacts with phosphorylated ubiquitination substrates SMAD3 and SMAD4. Interacts with phosphorylated ubiquitination substrates CTNNB1, NFKBIA, NFKBIB, NFKBIE, NFKB1/nuclear factor NF-kappa-B p105 subunit, ATF4, CDC25A, DLG1, FBXO5 and SNAI1; the interaction requires the phosphorylation of the 2 serine residues in the substrate destruction motif D-S-G-X(2,3,4)-S. Binds UBQLN1. Interacts with CDC34 and UBE2R2. Interacts with FBXW11. Interacts with CUL4A and DDB1. Part of a SCF(BTRC)-like complex lacking CUL1, which is associated with phosphorylated NKBIA and RELA; RELA interacts directly with NFKBIA. Interacts with the phosphorylated form of GLI3. Interacts with CLU. Interacts with PER1 (phosphorylated), PER2 (phosphorylated) and PER3. Interacts with phosphorylated ubiquitination substrate CEP68. Interacts with ZC3H12A; this interaction occurs when ZC3H12A is phosphorylated in a IKBKB/IKKB-dependent manner. Interacts with HSF1; this interaction occurs during mitosis and induces HSF1 ubiquitin-dependent degradation, a process inhibited by CDC20. Interacts with NFE2L1. Interacts with INAVA. Interacts with IL10RA; this interaction leads to IL10RA ubiquitination and subsequent degradation. Interacts with REST. Interacts with KLF4; this interaction leads to KLF4 ubiquitination and subsequent degradation. Interacts with UBR2, as part of a SCF(BTRC) complex; the interaction mediates 'Lys-48'-linked ubiquitination of UBR2 and is regulated by DUSP22 in the T-cell receptor signaling pathway. (Microbial infection) Interacts with vaccinia virus A49; this interaction inhibits NF-kappa-B activation. As to quaternary structure, (Microbial infection) Interacts with HIV-1 Vpu. Ubiquitinated. Deubiquitinated by OTUD5, promoting its stability. As to expression, expressed in epididymis (at protein level).

The protein resides in the cytoplasm. It localises to the nucleus. It participates in protein modification; protein ubiquitination. Its function is as follows. Substrate recognition component of a SCF (SKP1-CUL1-F-box protein) E3 ubiquitin-protein ligase complex which mediates the ubiquitination and subsequent proteasomal degradation of target proteins. Recognizes and binds to phosphorylated target proteins. SCF(BTRC) mediates the ubiquitination of CTNNB1 and participates in Wnt signaling. SCF(BTRC) mediates the ubiquitination of phosphorylated NFKB1, ATF4, CDC25A, DLG1, FBXO5, PER1, SMAD3, SMAD4, SNAI1 and probably NFKB2. SCF(BTRC) mediates the ubiquitination of NFKBIA, NFKBIB and NFKBIE; the degradation frees the associated NFKB1 to translocate into the nucleus and to activate transcription. Ubiquitination of NFKBIA occurs at 'Lys-21' and 'Lys-22'. The SCF(FBXW11) complex also regulates NF-kappa-B by mediating ubiquitination of phosphorylated NFKB1: specifically ubiquitinates the p105 form of NFKB1, leading to its degradation. SCF(BTRC) mediates the ubiquitination of CEP68; this is required for centriole separation during mitosis. SCF(BTRC) mediates the ubiquitination and subsequent degradation of nuclear NFE2L1. Has an essential role in the control of the clock-dependent transcription via degradation of phosphorylated PER1 and PER2. May be involved in ubiquitination and subsequent proteasomal degradation through a DBB1-CUL4 E3 ubiquitin-protein ligase. Required for activation of NFKB-mediated transcription by IL1B, MAP3K14, MAP3K1, IKBKB and TNF. Required for proteolytic processing of GLI3. Mediates ubiquitination of REST, thereby leading to its proteasomal degradation. SCF(BTRC) mediates the ubiquitination and subsequent proteasomal degradation of KLF4; thereby negatively regulating cell pluripotency maintenance and embryogenesis. SCF(BTRC) acts as a regulator of mTORC1 signaling pathway by catalyzing ubiquitination and subsequent proteasomal degradation of phosphorylated DEPTOR, TFE3 and MITF. SCF(BTRC) directs 'Lys-48'-linked ubiquitination of UBR2 in the T-cell receptor signaling pathway. The polypeptide is F-box/WD repeat-containing protein 1A (BTRC) (Homo sapiens (Human)).